Consider the following 1079-residue polypeptide: Electrogenic sodium bicarbonate cotransporter 1 (1079 aa).

A required for interaction with AHCYL1 region spans residues 1–62; that stretch reads MEDEAVLDRG…EKKEKERISE (62 aa). At 1–466 the chain is on the cytoplasmic side; that stretch reads MEDEAVLDRG…FASDFYDALN (466 aa). Glu2 bears the Phosphoserine mark. Tyr30 carries the phosphotyrosine modification. The span at 39-52 shows a compositional bias: basic residues; sequence YRRRRRHKRKAGHK. A disordered region spans residues 39–78; it reads YRRRRRHKRKAGHKEKKEKERISENYSDKSDVENADESSS. Over residues 53–70 the composition is skewed to basic and acidic residues; sequence EKKEKERISENYSDKSDV. Residues Ser61, Ser65, Ser68, Ser223, Ser232, Ser233, and Ser245 each carry the phosphoserine modification. The segment at 235–266 is disordered; the sequence is SRMFSNPDNGSPAMTHRNLTSSSLNDISDKPE. Phosphothreonine is present on residues Thr249 and Thr254. Over residues 251 to 260 the composition is skewed to polar residues; it reads RNLTSSSLND. Residues Ser256, Ser257, and Ser262 each carry the phosphoserine modification. A helical transmembrane segment spans residues 467 to 491; sequence IQALSAILFIYLATVTNAITFGGLL. At 492–501 the chain is on the extracellular side; sequence GDATDNMQGV. A helical transmembrane segment spans residues 502 to 520; that stretch reads LESFLGTAVSGAIFCLFAG. Position 521 (Gln521) is a topological domain, cytoplasmic. A discontinuously helical membrane pass occupies residues 522–542; sequence PLTILSSTGPVLVFERLLFNF. Over 543–550 the chain is Extracellular; sequence SKDHSFDY. The chain crosses the membrane as a helical span at residues 551 to 571; that stretch reads LEFRLWIGLWSAFMCLILVAT. The Cytoplasmic segment spans residues 572–585; sequence DASFLVQYFTRFTE. A helical membrane pass occupies residues 586–609; it reads EGFSSLISFIFIYDAFKKMIKLAD. 2 N-linked (GlcNAc) asparagine glycosylation sites follow: Ile597 and Phe617. Over 610-692 the chain is Extracellular; that stretch reads YYPINSDFRV…GNNCDFVPDI (83 aa). The helical transmembrane segment at 693-710 threads the bilayer; sequence TLMSFILFLGTYTSSMAM. Residues 711–725 lie on the Cytoplasmic side of the membrane; it reads KKFKTSRYFPTTARK. A helical membrane pass occupies residues 726–745; it reads LISDFAIILSILIFCVIDAL. Residues 746–779 lie on the Extracellular side of the membrane; that stretch reads VGVDTPKLIVPSEFKPTSPHRGWFVPPFGGNPWW. Positions 748-779 are interaction with CA4; that stretch reads VDTPKLIVPSEFKPTSPHRGWFVPPFGGNPWW. A helical transmembrane segment spans residues 780–807; sequence VCLAAAIPALLVTILIFMDQQITAVIVN. At 808–819 the chain is on the cytoplasmic side; the sequence is RKEHKLKKGAGY. A helical transmembrane segment spans residues 820–836; sequence HLDLFWVAILMVVCSFM. A topological domain (extracellular) is located at residue Ala837. A discontinuously helical membrane pass occupies residues 838–855; sequence LPWYVAATVISIAHIDSL. Over 856–877 the chain is Cytoplasmic; sequence KMETETSAPGEQPKFLGVREQR. A helical transmembrane segment spans residues 878 to 894; it reads VTGTLVFILTGLSVFMA. Topologically, residues 895-901 are extracellular; the sequence is PILKFIP. The chain crosses the membrane as a helical span at residues 902 to 918; the sequence is MPVLYGVFLYMGVASLN. The Cytoplasmic segment spans residues 919 to 960; it reads GVQFMDRLKLLLMPLKHQPDFIYLRHVPLRRVHLFTSLQVLC. The segment at residues 961–986 is an intramembrane region (discontinuously helical); the sequence is LALLWILKSTVAAIIFPVMILALVAV. Topologically, residues 987–1079 are cytoplasmic; it reads RKGMDYLFSQ…STFLERHTSC (93 aa). The CA2-binding stretch occupies residues 1002–1004; sequence LDD. The disordered stretch occupies residues 1012-1079; that stretch reads KKKEDEKKKK…STFLERHTSC (68 aa). Residues Ser1026 and Ser1029 each carry the phosphoserine modification. Ser1026 carries the phosphoserine; by PKA modification. Residues 1030–1033 form a CA2-binding region; the sequence is DNDD. A phosphoserine mark is found at Ser1034 and Ser1044. Residues 1057–1059 form a required for basolateral targeting region; that stretch reads FLS. Asp1060, Leu1064, Ser1069, and Ser1078 each carry phosphoserine. Over residues 1062–1079 the composition is skewed to basic and acidic residues; that stretch reads KPLDRERSSTFLERHTSC.

This sequence belongs to the anion exchanger (TC 2.A.31) family. In terms of assembly, homodimer. Interacts with CA2/carbonic anhydrase 2 and CA4/carbonic anhydrase 4 which may regulate transporter activity. Isoform 1 but not isoform 2 interacts with AHCYL1 (via PEST domain when phosphorylated); the interaction increases SLC4A4 isoform 1 activity. Interacts with AHCYL2. Phosphorylation of Ser-1026 by PKA increases the binding of CA2 and changes the Na(+):HCO3(-) stoichiometry of the transporter from 3:1 to 2:1. Phosphorylated in presence of STK39 and dephosphorylated in presence of PP1 phosphatase; phosphorylation seems to inhibit SLC4A4 activity. In terms of processing, N-glycosylation is not necessary for the transporter basic functions. As to expression, specifically expressed in kidney and to a lower extent in liver, lung, spleen, brain, skeletal muscle and heart. In kidney, expressed in proximal tubules at the corticomedullary junction. Isoform 2 is specifically expressed in kidney. Isoform 1 is expressed in kidney and pancreas while isoform 3 is specifically expressed in brain (at protein level). In brain, isoform 1 is expressed in astrocytes while isoform 3 is expressed in neurons (at protein level). In the eye, isoform 1 is expressed in cornea, conjunctiva, lens epithelium, ciliary bodies and retina while isoform 2 is detected only in the conjunctiva.

The protein resides in the basolateral cell membrane. It is found in the cell membrane. It catalyses the reaction 2 hydrogencarbonate(out) + Na(+)(out) = 2 hydrogencarbonate(in) + Na(+)(in). The catalysed reaction is 3 hydrogencarbonate(out) + Na(+)(out) = 3 hydrogencarbonate(in) + Na(+)(in). Inhibited by 4,4'-diisothiocyanatostilbene-2,2'-disulfonic acid (DIDS). Its function is as follows. Electrogenic sodium/bicarbonate cotransporter with a Na(+):HCO3(-) stoichiometry varying from 1:2 to 1:3. May regulate bicarbonate influx/efflux at the basolateral membrane of cells and regulate intracellular pH. This chain is Electrogenic sodium bicarbonate cotransporter 1 (Slc4a4), found in Rattus norvegicus (Rat).